Reading from the N-terminus, the 245-residue chain is 1-(5-phosphoribosyl)-5-[(5-phosphoribosylamino)methylideneamino] imidazole-4-carboxamide isomerase (245 aa).

D8 functions as the Proton acceptor in the catalytic mechanism. D130 functions as the Proton donor in the catalytic mechanism.

The protein belongs to the HisA/HisF family.

It localises to the cytoplasm. It catalyses the reaction 1-(5-phospho-beta-D-ribosyl)-5-[(5-phospho-beta-D-ribosylamino)methylideneamino]imidazole-4-carboxamide = 5-[(5-phospho-1-deoxy-D-ribulos-1-ylimino)methylamino]-1-(5-phospho-beta-D-ribosyl)imidazole-4-carboxamide. Its pathway is amino-acid biosynthesis; L-histidine biosynthesis; L-histidine from 5-phospho-alpha-D-ribose 1-diphosphate: step 4/9. The sequence is that of 1-(5-phosphoribosyl)-5-[(5-phosphoribosylamino)methylideneamino] imidazole-4-carboxamide isomerase from Pseudomonas entomophila (strain L48).